The chain runs to 87 residues: MDAAEKKKIIEEYATHPGDTGSPDVQVAILTKRIAELTEHLKVHKGDHHSRRGLMLMVGQRRRLLNYIAKNDIEHYRELIARLGLRR.

It belongs to the universal ribosomal protein uS15 family. Part of the 30S ribosomal subunit. Forms a bridge to the 50S subunit in the 70S ribosome, contacting the 23S rRNA.

One of the primary rRNA binding proteins, it binds directly to 16S rRNA where it helps nucleate assembly of the platform of the 30S subunit by binding and bridging several RNA helices of the 16S rRNA. In terms of biological role, forms an intersubunit bridge (bridge B4) with the 23S rRNA of the 50S subunit in the ribosome. This Cutibacterium acnes (strain DSM 16379 / KPA171202) (Propionibacterium acnes) protein is Small ribosomal subunit protein uS15.